Here is a 180-residue protein sequence, read N- to C-terminus: Large ribosomal subunit protein uL6 (180 aa).

Belongs to the universal ribosomal protein uL6 family. Part of the 50S ribosomal subunit.

This protein binds to the 23S rRNA, and is important in its secondary structure. It is located near the subunit interface in the base of the L7/L12 stalk, and near the tRNA binding site of the peptidyltransferase center. This Borreliella burgdorferi (strain ATCC 35210 / DSM 4680 / CIP 102532 / B31) (Borrelia burgdorferi) protein is Large ribosomal subunit protein uL6.